The primary structure comprises 179 residues: Large ribosomal subunit protein uL5c (179 aa).

This sequence belongs to the universal ribosomal protein uL5 family. As to quaternary structure, part of the 50S ribosomal subunit; contacts the 5S rRNA.

Its subcellular location is the plastid. Its function is as follows. Binds 5S rRNA, forms part of the central protuberance of the 50S subunit. The protein is Large ribosomal subunit protein uL5c (rpl5) of Euglena longa (Euglenophycean alga).